Reading from the N-terminus, the 136-residue chain is MLQPKRTKFRKVHKGRNRGIAGGTEVSFGTFGLKAVGRGRLTARQIEAARRAMTRAVKRQGKIWIRVFPDKPITEKPLEVRMGKGKGNVEYWVALIQPGKVLYEMDGVSEEIAREAFALAAAKLPVKTTFVTKTVM.

It belongs to the universal ribosomal protein uL16 family. Part of the 50S ribosomal subunit.

Binds 23S rRNA and is also seen to make contacts with the A and possibly P site tRNAs. This chain is Large ribosomal subunit protein uL16, found in Aggregatibacter actinomycetemcomitans (Actinobacillus actinomycetemcomitans).